The sequence spans 327 residues: E3 ubiquitin ligase Rnf121 (327 aa).

Ala-2 carries the N-acetylalanine modification. Transmembrane regions (helical) follow at residues 50–70, 79–99, 100–120, 148–168, and 172–192; these read MHAE…LLLV, SYNM…TVKL, HWWR…FVTF, ATGI…NLLF, and PEDA…YGVL. The RING-type; atypical zinc finger occupies 226-276; sequence CAVCGQQIFVDVNEEGIIENTYRLSCNHVFHEFCIRGWCIVGKKQTCPYCK. The helical transmembrane segment at 306–326 threads the bilayer; the sequence is LVAWQPVIIGLVQGISYILGL.

It belongs to the RNF121 family.

Its subcellular location is the endoplasmic reticulum membrane. It carries out the reaction S-ubiquitinyl-[E2 ubiquitin-conjugating enzyme]-L-cysteine + [acceptor protein]-L-lysine = [E2 ubiquitin-conjugating enzyme]-L-cysteine + N(6)-ubiquitinyl-[acceptor protein]-L-lysine.. It functions in the pathway protein modification; protein ubiquitination. In terms of biological role, E3 ubiquitin ligase which accepts ubiquitin and transfers it to substrates thereby promoting their degradation by the endoplasmic reticulum-associated degradation (ERAD) pathway which is a pathway involved in ubiquitin-dependent degradation of misfolded endoplasmic reticulum proteins. May regulate the unfolded protein response to reduce endoplasmic reticulum stress. The protein is E3 ubiquitin ligase Rnf121 (Rnf121) of Mus musculus (Mouse).